The chain runs to 584 residues: Optineurin (584 aa).

The tract at residues 1 to 32 (MSHQPLSCLTEKGDSPCETPGNGPSNMVHPSL) is disordered. A coiled-coil region spans residues 38–180 (EELLQQMKEL…VSELQLKLNS (143 aa)). The tract at residues 58-219 (MKLNNQAMKG…TPTRTDPISL (162 aa)) is interaction with Rab8. Residues 186–191 (DSFVEI) carry the LIR motif. At serine 187 the chain carries Phosphoserine. 2 coiled-coil regions span residues 243 to 278 (CLRE…HSST) and 307 to 511 (IQVT…DIEE). Residues 267–295 (DFEKKANGHSSTEKQTARRADREKEDKGQ) show a composition bias toward basic and acidic residues. A disordered region spans residues 267–302 (DFEKKANGHSSTEKQTARRADREKEDKGQESVGSEV). Serine 345 carries the phosphoserine modification. The tract at residues 414 to 584 (TKQQAEKVDK…LQIHVMDCII (171 aa)) is interaction with HD. Residues 415–524 (KQQAEKVDKM…RQSLMEMQCR (110 aa)) are interaction with MYO6. A UBAN motif is present at residues 477 to 482 (DFHAER). Residue serine 530 is modified to Phosphoserine. The CCHC NOA-type zinc finger occupies 554 to 584 (PRSIPIHSCPKCGEVLPDIDTLQIHVMDCII). Cysteine 562, cysteine 565, histidine 578, and cysteine 582 together coordinate Zn(2+).

As to quaternary structure, self-associates. Interacts with HD, GTF3A, TRAF3, TBK1 and MYO6. Interacts (via UBAN) with ubiquitinated TFRC. Interacts with active GTP-bound Rab8 (RAB8A and/or RAB8B). Interacts with TBC1D17. Binds to linear ubiquitin chains. Interacts with LC3 family members MAP1LC3A, MAP1LC3B, GABARAP, GABARAPL1 and GABARAPL2; OPTN phosphorylation increases the association (at least with MAP1LC3B). Interacts with RAB12; the interaction may be indirect. Interacts with TBK1; this interaction leads to the Golgi localization of TBK1 and its subsequent activation. Interacts with palmitoyltransferase ZDHHC17/HIP14; the interaction does not lead to palmitoylation of OPTN. Interacts with CYLD. Interacts with TOM1; the interaction is indirect and is mediated by MYO6, which acts as a bridge between TOM1 and OPTN. Interacts with USP12; the interaction is independent of USP12 deubiquitinase activity and may be involved in regulation of autophagic flux. Phosphorylated by TBK1, leading to restrict bacterial proliferation in case of infection. In terms of tissue distribution, in eye, it is expressed in anterior segment, retina, and optic nerve blood vessels (at protein level). Highly expressed in adult liver, heart and testis.

It is found in the cytoplasm. The protein resides in the perinuclear region. It localises to the golgi apparatus. The protein localises to the trans-Golgi network. Its subcellular location is the cytoplasmic vesicle. It is found in the autophagosome. The protein resides in the recycling endosome. In terms of biological role, plays an important role in the maintenance of the Golgi complex, in membrane trafficking, in exocytosis, through its interaction with myosin VI and Rab8. Links myosin VI to the Golgi complex and plays an important role in Golgi ribbon formation. Plays a role in the activation of innate immune response during viral infection. Mechanistically, recruits TBK1 at the Golgi apparatus, promoting its trans-phosphorylation after RLR or TLR3 stimulation. In turn, activated TBK1 phosphorylates its downstream partner IRF3 to produce IFN-beta. Plays a neuroprotective role in the eye and optic nerve. May act by regulating membrane trafficking and cellular morphogenesis via a complex that contains Rab8 and huntingtin (HD). Mediates the interaction of Rab8 with the probable GTPase-activating protein TBC1D17 during Rab8-mediated endocytic trafficking, such as that of transferrin receptor (TFRC/TfR); regulates Rab8 recruitment to tubules emanating from the endocytic recycling compartment. Autophagy receptor that interacts directly with both the cargo to become degraded and an autophagy modifier of the MAP1 LC3 family; targets ubiquitin-coated bacteria (xenophagy), such as cytoplasmic Salmonella enterica, and appears to function in the same pathway as SQSTM1 and CALCOCO2/NDP52. The sequence is that of Optineurin (Optn) from Mus musculus (Mouse).